Reading from the N-terminus, the 181-residue chain is Early E3 20.3 kDa glycoprotein (181 aa).

N29, N57, N70, and N75 each carry an N-linked (GlcNAc...) asparagine; by host glycan.

Belongs to the adenoviridae E3_20 family.

Its function is as follows. E3 proteins seem to be dispensable for virus growth in tissue culture cells. They are potentially important for virus growth under special conditions; E3 region may help adenoviruses to evade the immune surveillance of the host. This is Early E3 20.3 kDa glycoprotein from Human adenovirus B serotype 11 (strain Slobiski) (HAdV-11).